The following is a 388-amino-acid chain: Succinate--CoA ligase [ADP-forming] subunit beta (388 aa).

The 228-residue stretch at Lys9 to Lys236 folds into the ATP-grasp domain. Residues Lys45, Gly52 to Gly54, Glu91, Ser94, and Glu99 each bind ATP. Residues Asn191 and Asp205 each coordinate Mg(2+). Substrate contacts are provided by residues Asn256 and Gly318–Thr320.

This sequence belongs to the succinate/malate CoA ligase beta subunit family. Heterotetramer of two alpha and two beta subunits. The cofactor is Mg(2+).

It catalyses the reaction succinate + ATP + CoA = succinyl-CoA + ADP + phosphate. It carries out the reaction GTP + succinate + CoA = succinyl-CoA + GDP + phosphate. The protein operates within carbohydrate metabolism; tricarboxylic acid cycle; succinate from succinyl-CoA (ligase route): step 1/1. Succinyl-CoA synthetase functions in the citric acid cycle (TCA), coupling the hydrolysis of succinyl-CoA to the synthesis of either ATP or GTP and thus represents the only step of substrate-level phosphorylation in the TCA. The beta subunit provides nucleotide specificity of the enzyme and binds the substrate succinate, while the binding sites for coenzyme A and phosphate are found in the alpha subunit. This is Succinate--CoA ligase [ADP-forming] subunit beta from Parafrankia sp. (strain EAN1pec).